Consider the following 152-residue polypeptide: SXP/RAL-2 family protein Ani s 5 (152 aa).

The signal sequence occupies residues 1–18 (MKTLIVAALFCTIGMALA). Necessary for IgE-binding stretches follow at residues 25-42 (PPFL…FFEL), 49-54 (KTDPEI), 58-66 (LDAWVDTLG), and 103-120 (KKAD…SLNG). 2 igG4-binding regions span residues 49–68 (KTDP…LGGD) and 118–137 (LNGI…LPQS). The interval 127–146 (IQAIYKTLPQSVKDELEKGI) is igE-binding and IgG4-binding.

This sequence belongs to the SXP/RAL-2 family. In terms of assembly, monomer. As to expression, excretory gland, ventriculus, and the luminal epithelium of the intestine of the larvae.

The protein resides in the secreted. The sequence is that of SXP/RAL-2 family protein Ani s 5 from Anisakis simplex (Herring worm).